Reading from the N-terminus, the 296-residue chain is Probable lipid kinase YegS-like (296 aa).

Positions 1-130 (MPHTLLILNG…IDLAQVNDKH (130 aa)) constitute a DAGKc domain. Residues threonine 37, 63-69 (GDGTINE), and threonine 92 each bind ATP. Mg(2+) contacts are provided by leucine 212, aspartate 215, and leucine 217. The Proton acceptor role is filled by glutamate 268.

It belongs to the diacylglycerol/lipid kinase family. YegS lipid kinase subfamily. Mg(2+) is required as a cofactor. The cofactor is Ca(2+).

It is found in the cytoplasm. Probably phosphorylates lipids; the in vivo substrate is unknown. This Yersinia enterocolitica serotype O:8 / biotype 1B (strain NCTC 13174 / 8081) protein is Probable lipid kinase YegS-like.